A 126-amino-acid polypeptide reads, in one-letter code: Large ribosomal subunit protein bL17c (126 aa).

A chloroplast-targeting transit peptide spans 1–10 (MIDNGGRFFA).

As to quaternary structure, component of the chloroplast large ribosomal subunit (LSU). Mature 70S chloroplast ribosomes of higher plants consist of a small (30S) and a large (50S) subunit. The 30S small subunit contains 1 molecule of ribosomal RNA (16S rRNA) and 24 different proteins. The 50S large subunit contains 3 rRNA molecules (23S, 5S and 4.5S rRNA) and 33 different proteins.

Its subcellular location is the plastid. It is found in the chloroplast. Its function is as follows. Component of the chloroplast ribosome (chloro-ribosome), a dedicated translation machinery responsible for the synthesis of chloroplast genome-encoded proteins, including proteins of the transcription and translation machinery and components of the photosynthetic apparatus. The chain is Large ribosomal subunit protein bL17c (RPL17) from Spinacia oleracea (Spinach).